Consider the following 544-residue polypeptide: Glutamyl-tRNA(Gln) amidotransferase subunit B, chloroplastic/mitochondrial (544 aa).

It belongs to the GatB/GatE family. GatB subfamily. As to quaternary structure, subunit of the heterotrimeric GatCAB amidotransferase (AdT) complex, composed of A, B and C subunits.

Its subcellular location is the mitochondrion. The protein localises to the plastid. The protein resides in the chloroplast. The enzyme catalyses L-glutamyl-tRNA(Gln) + L-glutamine + ATP + H2O = L-glutaminyl-tRNA(Gln) + L-glutamate + ADP + phosphate + H(+). Functionally, allows the formation of correctly charged Gln-tRNA(Gln) through the transamidation of misacylated Glu-tRNA(Gln) in chloroplasts and mitochondria. The reaction takes place in the presence of glutamine and ATP through an activated gamma-phospho-Glu-tRNA(Gln). The chain is Glutamyl-tRNA(Gln) amidotransferase subunit B, chloroplastic/mitochondrial from Oryza sativa subsp. japonica (Rice).